A 510-amino-acid chain; its full sequence is NAD(P)H-quinone oxidoreductase subunit 2 B, chloroplastic (510 aa).

Helical transmembrane passes span 26-46, 57-77, 99-119, 124-144, 149-169, 183-203, 227-247, 295-315, 323-342, 354-374, 395-415, 418-438, and 484-504; these read LFDG…ILLL, IPWF…ALLF, IFQF…VEYI, MAIT…MFLC, LITI…LSGY, YLLM…WLYG, PGIS…LSPA, WHPL…LIAI, MLAY…IIVG, YMLF…LFGL, ALSL…AGFF, LHLF…IGLF, and MIVC…IIAI.

It belongs to the complex I subunit 2 family. NDH is composed of at least 16 different subunits, 5 of which are encoded in the nucleus.

The protein resides in the plastid. The protein localises to the chloroplast thylakoid membrane. It carries out the reaction a plastoquinone + NADH + (n+1) H(+)(in) = a plastoquinol + NAD(+) + n H(+)(out). The enzyme catalyses a plastoquinone + NADPH + (n+1) H(+)(in) = a plastoquinol + NADP(+) + n H(+)(out). Functionally, NDH shuttles electrons from NAD(P)H:plastoquinone, via FMN and iron-sulfur (Fe-S) centers, to quinones in the photosynthetic chain and possibly in a chloroplast respiratory chain. The immediate electron acceptor for the enzyme in this species is believed to be plastoquinone. Couples the redox reaction to proton translocation, and thus conserves the redox energy in a proton gradient. This chain is NAD(P)H-quinone oxidoreductase subunit 2 B, chloroplastic, found in Oenothera argillicola (Appalachian evening primrose).